A 162-amino-acid chain; its full sequence is Crossover junction endodeoxyribonuclease RuvC (162 aa).

Catalysis depends on residues D7, E67, and D140. D7, E67, and D140 together coordinate Mg(2+).

The protein belongs to the RuvC family. As to quaternary structure, homodimer which binds Holliday junction (HJ) DNA. The HJ becomes 2-fold symmetrical on binding to RuvC with unstacked arms; it has a different conformation from HJ DNA in complex with RuvA. In the full resolvosome a probable DNA-RuvA(4)-RuvB(12)-RuvC(2) complex forms which resolves the HJ. Mg(2+) is required as a cofactor.

It is found in the cytoplasm. It catalyses the reaction Endonucleolytic cleavage at a junction such as a reciprocal single-stranded crossover between two homologous DNA duplexes (Holliday junction).. Functionally, the RuvA-RuvB-RuvC complex processes Holliday junction (HJ) DNA during genetic recombination and DNA repair. Endonuclease that resolves HJ intermediates. Cleaves cruciform DNA by making single-stranded nicks across the HJ at symmetrical positions within the homologous arms, yielding a 5'-phosphate and a 3'-hydroxyl group; requires a central core of homology in the junction. The consensus cleavage sequence is 5'-(A/T)TT(C/G)-3'. Cleavage occurs on the 3'-side of the TT dinucleotide at the point of strand exchange. HJ branch migration catalyzed by RuvA-RuvB allows RuvC to scan DNA until it finds its consensus sequence, where it cleaves and resolves the cruciform DNA. The polypeptide is Crossover junction endodeoxyribonuclease RuvC (Wolinella succinogenes (strain ATCC 29543 / DSM 1740 / CCUG 13145 / JCM 31913 / LMG 7466 / NCTC 11488 / FDC 602W) (Vibrio succinogenes)).